Here is a 78-residue protein sequence, read N- to C-terminus: Acyl carrier protein (78 aa).

The 76-residue stretch at 2 to 77 folds into the Carrier domain; that stretch reads SDIASRVKAI…QAISYIEEAK (76 aa). The residue at position 37 (Ser37) is an O-(pantetheine 4'-phosphoryl)serine.

The protein belongs to the acyl carrier protein (ACP) family. 4'-phosphopantetheine is transferred from CoA to a specific serine of apo-ACP by AcpS. This modification is essential for activity because fatty acids are bound in thioester linkage to the sulfhydryl of the prosthetic group.

It localises to the cytoplasm. Its pathway is lipid metabolism; fatty acid biosynthesis. Its function is as follows. Carrier of the growing fatty acid chain in fatty acid biosynthesis. This is Acyl carrier protein from Flavobacterium johnsoniae (strain ATCC 17061 / DSM 2064 / JCM 8514 / BCRC 14874 / CCUG 350202 / NBRC 14942 / NCIMB 11054 / UW101) (Cytophaga johnsonae).